The following is a 227-amino-acid chain: Max dimerization protein 1 (227 aa).

The Nuclear localization signal motif lies at 21-48 (RREREAEHGYASMLPYSKDRDAFKRRNK). 3 disordered regions span residues 30–66 (YASM…MEKN), 142–161 (MDSV…REEL), and 184–227 (GWSS…GLGL). In terms of domain architecture, bHLH spans 55–107 (SSRSTHNEMEKNRRAHLRLCLEKLKGLVPLGPESSRHTTLSLLTKAKLHIKKL). Positions 198-211 (MQSLGSDEGYSSAT) are enriched in polar residues. A compositionally biased stretch (basic and acidic residues) spans 216-227 (KLQDGHKAGLGL).

Heterodimer with MAX; the interaction is required for DNA-binding. DNA binding requires dimerization with another bHLH protein; does not form homodimers, and does not bind to DNA in the absence of MAX in vitro. Interacts with RNF17. In terms of processing, ubiquitinated by BIRC2/c-IAP1, leading to its subsequent degradation by the proteasome.

The protein resides in the nucleus. Component of a transcriptional repressor complex together with MAX. In complex with MAX binds to the core DNA sequence 5'-CAC[GA]TG-3'. Antagonizes MYC transcriptional activity by competing with MYC for MAX binding. Binds to the TERT promoter and represses telomerase expression, possibly by interfering with MYC binding. In Mus musculus (Mouse), this protein is Max dimerization protein 1 (Mxd1).